Reading from the N-terminus, the 379-residue chain is DNA replication and repair protein RecF (379 aa).

An ATP-binding site is contributed by 34–41 (GDNGAGKT).

This sequence belongs to the RecF family.

It localises to the cytoplasm. Its function is as follows. The RecF protein is involved in DNA metabolism; it is required for DNA replication and normal SOS inducibility. RecF binds preferentially to single-stranded, linear DNA. It also seems to bind ATP. The polypeptide is DNA replication and repair protein RecF (Mesorhizobium japonicum (strain LMG 29417 / CECT 9101 / MAFF 303099) (Mesorhizobium loti (strain MAFF 303099))).